Consider the following 362-residue polypeptide: Alcohol dehydrogenase 13 (362 aa).

Residues Cys-51, His-73, Cys-104, Cys-107, Cys-110, Cys-118, and Cys-168 each coordinate Zn(2+). Residue His-73 coordinates substrate. Residues 193–198 (GLGGLG) and 280–282 (VGA) contribute to the NAD(+) site.

This sequence belongs to the zinc-containing alcohol dehydrogenase family. Class-III subfamily. In terms of assembly, homodimer. The cofactor is Zn(2+).

This chain is Alcohol dehydrogenase 13, found in Catharanthus roseus (Madagascar periwinkle).